A 94-amino-acid polypeptide reads, in one-letter code: Acylphosphatase (94 aa).

One can recognise an Acylphosphatase-like domain in the interval A7 to G94. Active-site residues include R22 and N40.

The protein belongs to the acylphosphatase family.

The catalysed reaction is an acyl phosphate + H2O = a carboxylate + phosphate + H(+). This is Acylphosphatase (acyP) from Rhizobium etli (strain ATCC 51251 / DSM 11541 / JCM 21823 / NBRC 15573 / CFN 42).